The chain runs to 114 residues: Protein preY, mitochondrial (114 aa).

The transit peptide at 1 to 35 directs the protein to the mitochondrion; sequence MLSGARCRLASALRGTRAPPSAVARRCLHASGSRP. The segment at 14–49 is disordered; sequence RGTRAPPSAVARRCLHASGSRPLADRGKKTEEPPRD. The span at 36-49 shows a compositional bias: basic and acidic residues; it reads LADRGKKTEEPPRD. In terms of domain architecture, TRM112 spans 51 to 97; sequence DPALLEFLVCPLSKKPLRYEASTNELINEELGIAYPIIDGIPNMIPQ.

It belongs to the PREY family. In terms of assembly, interacts (via TRM112 domain) with NDUFAF5; the interaction is direct and stabilizes NDUFAF5 protein. Interacts with COQ5; the interaction is direct, stabilizes COQ5 protein and associates PYURF with COQ enzyme complex.

The protein resides in the mitochondrion. In terms of biological role, in mitochondria, S-adenosylmethionine-dependent methyltransferase chaperone that supports both coenzyme Q biosynthesis, by stabilizing its components, such as COQ5, and NADH:ubiquinone oxidoreductase complex (complex I, MT-ND1) assembly, by stabilizing complex I assembly factors, such as NDUFAF5. The polypeptide is Protein preY, mitochondrial (Homo sapiens (Human)).